A 491-amino-acid chain; its full sequence is Tryptophan 5-hydroxylase 2 (491 aa).

At Ser-19 the chain carries Phosphoserine. The disordered stretch occupies residues 33–63 (NLTVNKSNSGKNDDKKGNKGSSRSETAPDSG). The ACT domain occupies 66 to 141 (AVVFSLRNEV…TIVTLNPPEN (76 aa)). Fe cation-binding residues include His-319, His-324, and Glu-364.

This sequence belongs to the biopterin-dependent aromatic amino acid hydroxylase family. As to quaternary structure, interacts with DNAJC12. Requires Fe(2+) as cofactor.

It catalyses the reaction (6R)-L-erythro-5,6,7,8-tetrahydrobiopterin + L-tryptophan + O2 = 5-hydroxy-L-tryptophan + (4aS,6R)-4a-hydroxy-L-erythro-5,6,7,8-tetrahydrobiopterin. It participates in aromatic compound metabolism; serotonin biosynthesis; serotonin from L-tryptophan: step 1/2. This is Tryptophan 5-hydroxylase 2 (TPH2) from Equus caballus (Horse).